Here is a 300-residue protein sequence, read N- to C-terminus: Formate dehydrogenase-O iron-sulfur subunit (300 aa).

At 1–260 (MAYQSQDIIR…KFWKGIWKPL (260 aa)) the chain is on the cytoplasmic side. 4Fe-4S ferredoxin-type domains follow at residues 30–60 (VAKL…DTVG), 91–123 (LEWL…QYAN), 124–153 (GIVD…LNPE), and 158–189 (YKCT…FGTK). Cys-39, Cys-42, Cys-45, Cys-49, Cys-100, Cys-103, Cys-108, Cys-112, Cys-133, Cys-136, Cys-139, Cys-143, Cys-160, Cys-163, Cys-175, and Cys-179 together coordinate [4Fe-4S] cluster. A helical transmembrane segment spans residues 261-279 (AAVGFAATFAASIFHYVGV). Topologically, residues 280-300 (GPNRADEEENNLHEEKDEERK) are periplasmic.

In terms of assembly, formate dehydrogenase is a membrane-bound complex, formed by subunits alpha, beta and gamma. It depends on [4Fe-4S] cluster as a cofactor.

It is found in the cell membrane. In terms of biological role, allows to use formate as major electron donor during aerobic respiration. The beta chain is an electron transfer unit containing 4 cysteine clusters involved in the formation of iron-sulfur centers. Electrons are transferred from the gamma chain to the molybdenum cofactor of the alpha subunit. This is Formate dehydrogenase-O iron-sulfur subunit (fdoH) from Escherichia coli (strain K12).